Consider the following 346-residue polypeptide: D-erythrose-4-phosphate dehydrogenase (346 aa).

11–12 (RI) is a binding site for NAD(+). Substrate contacts are provided by residues 163–165 (SCT), arginine 209, 222–223 (TK), and arginine 245. The active-site Nucleophile is the cysteine 164. Asparagine 327 contacts NAD(+).

It belongs to the glyceraldehyde-3-phosphate dehydrogenase family. Epd subfamily. As to quaternary structure, homotetramer.

It localises to the cytoplasm. It carries out the reaction D-erythrose 4-phosphate + NAD(+) + H2O = 4-phospho-D-erythronate + NADH + 2 H(+). The protein operates within cofactor biosynthesis; pyridoxine 5'-phosphate biosynthesis; pyridoxine 5'-phosphate from D-erythrose 4-phosphate: step 1/5. Functionally, catalyzes the NAD-dependent conversion of D-erythrose 4-phosphate to 4-phosphoerythronate. The sequence is that of D-erythrose-4-phosphate dehydrogenase from Vibrio vulnificus (strain CMCP6).